Reading from the N-terminus, the 187-residue chain is Ribonuclease HII (187 aa).

An RNase H type-2 domain is found at 1-187; it reads MIILGIDEAG…YKPVQVLLNE (187 aa). A divalent metal cation contacts are provided by Asp7, Glu8, and Asp99.

The protein belongs to the RNase HII family. Mn(2+) serves as cofactor. Mg(2+) is required as a cofactor.

It is found in the cytoplasm. It carries out the reaction Endonucleolytic cleavage to 5'-phosphomonoester.. Endonuclease that specifically degrades the RNA of RNA-DNA hybrids. This is Ribonuclease HII from Francisella tularensis subsp. holarctica (strain FTNF002-00 / FTA).